A 193-amino-acid chain; its full sequence is Holliday junction branch migration complex subunit RuvA (193 aa).

The interval 1–64 (MIGRIAGTLI…EDAHLLYGFG (64 aa)) is domain I. Residues 65–143 (TASERNTFRE…AELGHVPGTP (79 aa)) form a domain II region. Positions 144–151 (AVPDSAVD) are flexible linker. Residues 151–193 (DVLNALLALGYSEKEAAAAIKQVPAGTGVSDGIKLALKALSKA) are domain III.

It belongs to the RuvA family. Homotetramer. Forms an RuvA(8)-RuvB(12)-Holliday junction (HJ) complex. HJ DNA is sandwiched between 2 RuvA tetramers; dsDNA enters through RuvA and exits via RuvB. An RuvB hexamer assembles on each DNA strand where it exits the tetramer. Each RuvB hexamer is contacted by two RuvA subunits (via domain III) on 2 adjacent RuvB subunits; this complex drives branch migration. In the full resolvosome a probable DNA-RuvA(4)-RuvB(12)-RuvC(2) complex forms which resolves the HJ.

It is found in the cytoplasm. In terms of biological role, the RuvA-RuvB-RuvC complex processes Holliday junction (HJ) DNA during genetic recombination and DNA repair, while the RuvA-RuvB complex plays an important role in the rescue of blocked DNA replication forks via replication fork reversal (RFR). RuvA specifically binds to HJ cruciform DNA, conferring on it an open structure. The RuvB hexamer acts as an ATP-dependent pump, pulling dsDNA into and through the RuvAB complex. HJ branch migration allows RuvC to scan DNA until it finds its consensus sequence, where it cleaves and resolves the cruciform DNA. This chain is Holliday junction branch migration complex subunit RuvA, found in Cupriavidus necator (strain ATCC 17699 / DSM 428 / KCTC 22496 / NCIMB 10442 / H16 / Stanier 337) (Ralstonia eutropha).